A 248-amino-acid polypeptide reads, in one-letter code: Phosphoadenosine 5'-phosphosulfate reductase (248 aa).

The active-site Nucleophile; cysteine thiosulfonate intermediate is the Cys-239.

Belongs to the PAPS reductase family. CysH subfamily.

The protein resides in the cytoplasm. The catalysed reaction is [thioredoxin]-disulfide + sulfite + adenosine 3',5'-bisphosphate + 2 H(+) = [thioredoxin]-dithiol + 3'-phosphoadenylyl sulfate. The protein operates within sulfur metabolism; hydrogen sulfide biosynthesis; sulfite from sulfate: step 3/3. Its function is as follows. Catalyzes the formation of sulfite from phosphoadenosine 5'-phosphosulfate (PAPS) using thioredoxin as an electron donor. The protein is Phosphoadenosine 5'-phosphosulfate reductase of Alteromonas mediterranea (strain DSM 17117 / CIP 110805 / LMG 28347 / Deep ecotype).